The primary structure comprises 462 residues: RuvB-like 2 (462 aa).

G76–T83 serves as a coordination point for ATP.

This sequence belongs to the RuvB family. In terms of assembly, forms homohexameric rings. Can form a dodecamer with ruvbl2 made of two stacked hexameric rings. Is a component of the RNA polymerase II holoenzyme complex. Component of the chromatin-remodeling Ino80 complex. Component of some MLL1/MLL complex.

It is found in the nucleus. The protein resides in the dynein axonemal particle. It catalyses the reaction ATP + H2O = ADP + phosphate + H(+). Its function is as follows. Has single-stranded DNA-stimulated ATPase and ATP-dependent DNA helicase (5' to 3') activity suggesting a role in nuclear processes such as recombination and transcription. Proposed core component of the chromatin remodeling INO80 complex which exhibits DNA- and nucleosome-activated ATPase activity and catalyzes ATP-dependent nucleosome sliding. Involved in the endoplasmic reticulum (ER)-associated degradation (ERAD) pathway where it negatively regulates expression of ER stress response genes. This chain is RuvB-like 2 (ruvbl2), found in Xenopus laevis (African clawed frog).